We begin with the raw amino-acid sequence, 290 residues long: Fructose-1,6-bisphosphatase class 1 (290 aa).

Mg(2+) is bound by residues E78, D96, L98, and D99. Residues 99–102, Y201, and K226 each bind substrate; that span reads DGSS. E232 lines the Mg(2+) pocket.

It belongs to the FBPase class 1 family. In terms of assembly, homotetramer. The cofactor is Mg(2+).

It is found in the cytoplasm. The catalysed reaction is beta-D-fructose 1,6-bisphosphate + H2O = beta-D-fructose 6-phosphate + phosphate. It participates in carbohydrate biosynthesis; gluconeogenesis. This chain is Fructose-1,6-bisphosphatase class 1, found in Helicobacter pylori (strain ATCC 700392 / 26695) (Campylobacter pylori).